The primary structure comprises 291 residues: ATP synthase gamma chain (291 aa).

This sequence belongs to the ATPase gamma chain family. As to quaternary structure, F-type ATPases have 2 components, CF(1) - the catalytic core - and CF(0) - the membrane proton channel. CF(1) has five subunits: alpha(3), beta(3), gamma(1), delta(1), epsilon(1). CF(0) has three main subunits: a, b and c.

The protein resides in the cell inner membrane. Produces ATP from ADP in the presence of a proton gradient across the membrane. The gamma chain is believed to be important in regulating ATPase activity and the flow of protons through the CF(0) complex. In Sinorhizobium medicae (strain WSM419) (Ensifer medicae), this protein is ATP synthase gamma chain.